The following is a 464-amino-acid chain: Siroheme synthase (464 aa).

The interval 1 to 203 (MDYLPLFHNL…GQETEAERLL (203 aa)) is precorrin-2 dehydrogenase /sirohydrochlorin ferrochelatase. NAD(+) is bound by residues 22-23 (EI) and 43-44 (PQ). Ser-128 is modified (phosphoserine). Residues 216-464 (GEVYLVGAGP…AWFEGRQSAD (249 aa)) are uroporphyrinogen-III C-methyltransferase. Pro-225 is a binding site for S-adenosyl-L-methionine. Residue Asp-248 is the Proton acceptor of the active site. The active-site Proton donor is the Lys-270. S-adenosyl-L-methionine-binding positions include 301-303 (GGD), Ile-306, 331-332 (TA), Met-383, and Gly-412.

In the N-terminal section; belongs to the precorrin-2 dehydrogenase / sirohydrochlorin ferrochelatase family. It in the C-terminal section; belongs to the precorrin methyltransferase family.

It carries out the reaction uroporphyrinogen III + 2 S-adenosyl-L-methionine = precorrin-2 + 2 S-adenosyl-L-homocysteine + H(+). The enzyme catalyses precorrin-2 + NAD(+) = sirohydrochlorin + NADH + 2 H(+). It catalyses the reaction siroheme + 2 H(+) = sirohydrochlorin + Fe(2+). The protein operates within cofactor biosynthesis; adenosylcobalamin biosynthesis; precorrin-2 from uroporphyrinogen III: step 1/1. It functions in the pathway cofactor biosynthesis; adenosylcobalamin biosynthesis; sirohydrochlorin from precorrin-2: step 1/1. Its pathway is porphyrin-containing compound metabolism; siroheme biosynthesis; precorrin-2 from uroporphyrinogen III: step 1/1. It participates in porphyrin-containing compound metabolism; siroheme biosynthesis; siroheme from sirohydrochlorin: step 1/1. The protein operates within porphyrin-containing compound metabolism; siroheme biosynthesis; sirohydrochlorin from precorrin-2: step 1/1. Its function is as follows. Multifunctional enzyme that catalyzes the SAM-dependent methylations of uroporphyrinogen III at position C-2 and C-7 to form precorrin-2 via precorrin-1. Then it catalyzes the NAD-dependent ring dehydrogenation of precorrin-2 to yield sirohydrochlorin. Finally, it catalyzes the ferrochelation of sirohydrochlorin to yield siroheme. The chain is Siroheme synthase from Azotobacter vinelandii (strain DJ / ATCC BAA-1303).